We begin with the raw amino-acid sequence, 180 residues long: Crossover junction endodeoxyribonuclease RuvC (180 aa).

Active-site residues include D7, E66, and D138. D7, E66, and D138 together coordinate Mg(2+).

Belongs to the RuvC family. In terms of assembly, homodimer which binds Holliday junction (HJ) DNA. The HJ becomes 2-fold symmetrical on binding to RuvC with unstacked arms; it has a different conformation from HJ DNA in complex with RuvA. In the full resolvosome a probable DNA-RuvA(4)-RuvB(12)-RuvC(2) complex forms which resolves the HJ. The cofactor is Mg(2+).

Its subcellular location is the cytoplasm. The catalysed reaction is Endonucleolytic cleavage at a junction such as a reciprocal single-stranded crossover between two homologous DNA duplexes (Holliday junction).. In terms of biological role, the RuvA-RuvB-RuvC complex processes Holliday junction (HJ) DNA during genetic recombination and DNA repair. Endonuclease that resolves HJ intermediates. Cleaves cruciform DNA by making single-stranded nicks across the HJ at symmetrical positions within the homologous arms, yielding a 5'-phosphate and a 3'-hydroxyl group; requires a central core of homology in the junction. The consensus cleavage sequence is 5'-(A/T)TT(C/G)-3'. Cleavage occurs on the 3'-side of the TT dinucleotide at the point of strand exchange. HJ branch migration catalyzed by RuvA-RuvB allows RuvC to scan DNA until it finds its consensus sequence, where it cleaves and resolves the cruciform DNA. The protein is Crossover junction endodeoxyribonuclease RuvC of Burkholderia pseudomallei (strain 1710b).